The sequence spans 54 residues: Large ribosomal subunit protein bL32 (54 aa).

Residues 1–54 (MAVQQNRKTRSRRGMRRSHDALTAAQLSVDSTSGETHRRHHVTADGYYRGKKVI) form a disordered region. A compositionally biased stretch (basic residues) spans 7–16 (RKTRSRRGMR). Residues 25–34 (AQLSVDSTSG) show a composition bias toward polar residues.

This sequence belongs to the bacterial ribosomal protein bL32 family.

This Tolumonas auensis (strain DSM 9187 / NBRC 110442 / TA 4) protein is Large ribosomal subunit protein bL32.